The following is a 750-amino-acid chain: Photosystem I P700 chlorophyll a apoprotein A1 (750 aa).

The next 8 helical transmembrane spans lie at valine 70–alanine 93, leucine 156–histidine 179, leucine 195–leucine 219, isoleucine 291–tyrosine 309, tryptophan 346–tyrosine 369, leucine 385–valine 411, alanine 433–histidine 455, and phenylalanine 531–leucine 549. [4Fe-4S] cluster contacts are provided by cysteine 573 and cysteine 582. The next 2 membrane-spanning stretches (helical) occupy residues histidine 589 to tryptophan 610 and leucine 664 to phenylalanine 686. Histidine 675 is a chlorophyll a' binding site. Chlorophyll a is bound by residues methionine 683 and tyrosine 691. A phylloquinone-binding site is contributed by tryptophan 692. A helical membrane pass occupies residues alanine 724–alanine 744.

This sequence belongs to the PsaA/PsaB family. In terms of assembly, the PsaA/B heterodimer binds the P700 chlorophyll special pair and subsequent electron acceptors. PSI consists of a core antenna complex that captures photons, and an electron transfer chain that converts photonic excitation into a charge separation. The eukaryotic PSI reaction center is composed of at least 11 subunits. It depends on P700 is a chlorophyll a/chlorophyll a' dimer, A0 is one or more chlorophyll a, A1 is one or both phylloquinones and FX is a shared 4Fe-4S iron-sulfur center. as a cofactor.

The protein localises to the plastid. It localises to the chloroplast thylakoid membrane. It carries out the reaction reduced [plastocyanin] + hnu + oxidized [2Fe-2S]-[ferredoxin] = oxidized [plastocyanin] + reduced [2Fe-2S]-[ferredoxin]. PsaA and PsaB bind P700, the primary electron donor of photosystem I (PSI), as well as the electron acceptors A0, A1 and FX. PSI is a plastocyanin-ferredoxin oxidoreductase, converting photonic excitation into a charge separation, which transfers an electron from the donor P700 chlorophyll pair to the spectroscopically characterized acceptors A0, A1, FX, FA and FB in turn. Oxidized P700 is reduced on the lumenal side of the thylakoid membrane by plastocyanin. The protein is Photosystem I P700 chlorophyll a apoprotein A1 of Saccharum hybrid (Sugarcane).